We begin with the raw amino-acid sequence, 711 residues long: T-box transcription factor TBX2 (711 aa).

A DNA-binding region (T-box) is located at residues 109–287 (LEAKELWDQF…NNPFAKGFRD (179 aa)). The interval 313–449 (PERDGAESDA…GEGKEPSLAP (137 aa)) is disordered. The span at 326-340 (DPPPAREPPPSPSAA) shows a compositional bias: pro residues. 3 positions are modified to phosphoserine: Ser336, Ser342, and Ser360. Composition is skewed to basic and acidic residues over residues 363-372 (EPERTGEERS), 390-409 (TEPE…KEPT), and 421-444 (SLEK…EGKE). The tract at residues 518–602 (GSGSSGGAGP…ATSAAAAAAA (85 aa)) is repression domain 1 (RD1). 4 positions are modified to phosphoserine: Ser623, Ser652, Ser656, and Ser675. A disordered region spans residues 640 to 687 (TGLAAEGSKGGNSREPSPLPELALRKVGGPSRGALSPSGSAKEAASEL).

In terms of assembly, binds DNA as a monomer. Interacts with CHD4, HDAC1 and HDAC2, perhaps as components of a NuRD-like complex. Interacts with CBX3, HMGB2 and PBX1. Interacts with PML. In terms of processing, phosphorylated. May be phosphorylated by p38 MAPK in response to UV irradiation stress. In adults, highest levels in lung. Also found in heart, kidney, and ovary.

It is found in the nucleus. Transcription factor which acts as a transcriptional repressor. May also function as a transcriptional activator. Binds to the palindromic T site 5'-TTCACACCTAGGTGTGAA-3' DNA sequence, or a half-site, which are present in the regulatory region of several genes. Required for cardiac atrioventricular canal formation. May cooperate with NKX2.5 to negatively modulate expression of NPPA/ANF in the atrioventricular canal. May play a role as a positive regulator of TGFB2 expression, perhaps acting in concert with GATA4 in the developing outflow tract myocardium. Plays a role in limb pattern formation. Acts as a transcriptional repressor of ADAM10 gene expression, perhaps in concert with histone deacetylase HDAC1 as cofactor. Involved in branching morphogenesis in both developing lungs and adult mammary glands, via negative modulation of target genes; acting redundantly with TBX3. Required, together with TBX3, to maintain cell proliferation in the embryonic lung mesenchyme; perhaps acting downstream of SHH, BMP and TGFbeta signaling. Involved in modulating early inner ear development, acting independently of, and also redundantly with TBX3, in different subregions of the developing ear. Acts as a negative regulator of PML function in cellular senescence. Acts as a negative regulator of expression of CDKN1A/p21, IL33 and CCN4; repression of CDKN1A is enhanced in response to UV-induced stress, perhaps as a result of phosphorylation by p38 MAPK. Negatively modulates expression of CDKN2A/p19ARF and CDH1/E-cadherin. Plays a role in induction of the epithelial-mesenchymal transition (EMT). Plays a role in melanocyte proliferation, perhaps via regulation of cyclin CCND1. Involved in melanogenesis, acting via negative modulation of expression of DHICA oxidase/TYRP1 and P protein/OCA2. Involved in regulating retinal pigment epithelium (RPE) cell proliferation, perhaps via negatively modulating transcription of the transcription factor CEBPD. This Mus musculus (Mouse) protein is T-box transcription factor TBX2 (Tbx2).